A 375-amino-acid chain; its full sequence is Queuine tRNA-ribosyltransferase (375 aa).

Asp-89 (proton acceptor) is an active-site residue. Residues 89-93, Asp-143, Gln-187, and Gly-214 each bind substrate; that span reads DSGGF. An RNA binding region spans residues 245–251; the sequence is GVGKPED. Asp-264 functions as the Nucleophile in the catalytic mechanism. The interval 269-273 is RNA binding; important for wobble base 34 recognition; the sequence is TRNAR. Zn(2+) contacts are provided by Cys-302, Cys-304, Cys-307, and His-333.

This sequence belongs to the queuine tRNA-ribosyltransferase family. Homodimer. Within each dimer, one monomer is responsible for RNA recognition and catalysis, while the other monomer binds to the replacement base PreQ1. Zn(2+) is required as a cofactor.

The enzyme catalyses 7-aminomethyl-7-carbaguanine + guanosine(34) in tRNA = 7-aminomethyl-7-carbaguanosine(34) in tRNA + guanine. Its pathway is tRNA modification; tRNA-queuosine biosynthesis. Functionally, catalyzes the base-exchange of a guanine (G) residue with the queuine precursor 7-aminomethyl-7-deazaguanine (PreQ1) at position 34 (anticodon wobble position) in tRNAs with GU(N) anticodons (tRNA-Asp, -Asn, -His and -Tyr). Catalysis occurs through a double-displacement mechanism. The nucleophile active site attacks the C1' of nucleotide 34 to detach the guanine base from the RNA, forming a covalent enzyme-RNA intermediate. The proton acceptor active site deprotonates the incoming PreQ1, allowing a nucleophilic attack on the C1' of the ribose to form the product. After dissociation, two additional enzymatic reactions on the tRNA convert PreQ1 to queuine (Q), resulting in the hypermodified nucleoside queuosine (7-(((4,5-cis-dihydroxy-2-cyclopenten-1-yl)amino)methyl)-7-deazaguanosine). The chain is Queuine tRNA-ribosyltransferase from Salmonella choleraesuis (strain SC-B67).